The chain runs to 139 residues: Putative nickel-responsive regulator (139 aa).

Ni(2+) is bound by residues H79, H90, H92, and C98.

The protein belongs to the transcriptional regulatory CopG/NikR family. Requires Ni(2+) as cofactor.

In terms of biological role, transcriptional regulator. This is Putative nickel-responsive regulator from Anaeromyxobacter dehalogenans (strain 2CP-1 / ATCC BAA-258).